A 156-amino-acid polypeptide reads, in one-letter code: Ribosome maturation factor RimP (156 aa).

Belongs to the RimP family.

Its subcellular location is the cytoplasm. Functionally, required for maturation of 30S ribosomal subunits. The polypeptide is Ribosome maturation factor RimP (Microcystis aeruginosa (strain NIES-843 / IAM M-2473)).